The primary structure comprises 193 residues: Ion-translocating oxidoreductase complex subunit A (193 aa).

Transmembrane regions (helical) follow at residues 5–25 (LLLF…FLGL), 39–59 (IGMG…AWMV), 62–82 (FILL…LVIA), 102–122 (LLGI…VALL), 134–154 (AVYG…FAAI), and 171–191 (SIAL…TGLV).

Belongs to the NqrDE/RnfAE family. In terms of assembly, the complex is composed of six subunits: RnfA, RnfB, RnfC, RnfD, RnfE and RnfG.

Its subcellular location is the cell inner membrane. Its function is as follows. Part of a membrane-bound complex that couples electron transfer with translocation of ions across the membrane. This chain is Ion-translocating oxidoreductase complex subunit A, found in Yersinia enterocolitica serotype O:8 / biotype 1B (strain NCTC 13174 / 8081).